The sequence spans 173 residues: MKDLRYPIGQFTYVGTITEEIIDKWIQEIEDLPNELARAIKDLDQKQLDTPYRVGGWTVRQVVHHVVDSHMNSYIRFKLAMTEKNPTIKPYKEEKWAELPDSKLPVDVSLVMLDSLHKRWVNLLYSLEPADLEKTFNHPESGETKLAAAIGLYAWHGRHHTAHITSLRERLNW.

Residues His-65, His-156, and His-160 each coordinate Zn(2+).

Belongs to the metal hydrolase YfiT family. Homodimer. It depends on Zn(2+) as a cofactor.

The protein resides in the cytoplasm. In terms of biological role, possible metal-dependent hydrolase. The polypeptide is Putative metal-dependent hydrolase BcerKBAB4_2443 (Bacillus mycoides (strain KBAB4) (Bacillus weihenstephanensis)).